The primary structure comprises 500 residues: Probable zinc metalloprotease MGYG_02393 (500 aa).

Residues 1–24 (MHLSMGGLLPGLALLASANALALA) form the signal peptide. Asparagine 61, asparagine 103, and asparagine 124 each carry an N-linked (GlcNAc...) asparagine glycan. The Zn(2+) site is built by histidine 174, aspartate 194, and glutamate 230. An N-linked (GlcNAc...) asparagine glycan is attached at asparagine 245. Zn(2+) is bound at residue aspartate 257. Residues 414–500 (MPRNVRVNTS…ERGVAVLPFP (87 aa)) form the Fibronectin type-III domain. 2 N-linked (GlcNAc...) asparagine glycosylation sites follow: asparagine 421 and asparagine 427.

Belongs to the peptidase M28 family. M28B subfamily. The cofactor is Zn(2+).

The protein resides in the secreted. This is Probable zinc metalloprotease MGYG_02393 from Arthroderma gypseum (strain ATCC MYA-4604 / CBS 118893) (Microsporum gypseum).